Consider the following 397-residue polypeptide: MRILVLNSGSSSIKFQLFEMQTKTSLASGLVEQIGSSSSRAVLKANGEIYEIKRFIKDHHDGLEAMNELFTTSHTLHDLSELDGIGHRIVHGGESFFSSMIVDESVIKKIEEISPLAPLHNPGHLAGIKNAMKESKNVPHVVVFDTVFHQSMPEYAYRYALPYDVCKTHHIRKYGFHGTSHRYVCKQAAKMLGIEFDKFNAISLHLGNGASACAVQNGKSIDTSMGLSPLEGLIMGTRSGDMDPAVVIYLLNIGVLKWNEIDNFLNKKSGLFGICGSSDMREVVAKMQNDERAKLAFEMFCYRVKKYIGSYYAILGRVDALIFTGGIGENAPNTRQKICDDLKHLGIHINHELNFSNERGERCIDEDGAKIKTLIIPTNEELEIAIETARVIKERTL.

Asparagine 7 contacts Mg(2+). Residue lysine 14 participates in ATP binding. Arginine 88 lines the substrate pocket. Aspartate 145 functions as the Proton donor/acceptor in the catalytic mechanism. ATP-binding positions include 205–209, 279–281, and 326–330; these read HLGNG, DMR, and GIGEN. A Mg(2+)-binding site is contributed by glutamate 380.

This sequence belongs to the acetokinase family. Homodimer. Mg(2+) is required as a cofactor. Requires Mn(2+) as cofactor.

It is found in the cytoplasm. The catalysed reaction is acetate + ATP = acetyl phosphate + ADP. The protein operates within metabolic intermediate biosynthesis; acetyl-CoA biosynthesis; acetyl-CoA from acetate: step 1/2. Its function is as follows. Catalyzes the formation of acetyl phosphate from acetate and ATP. Can also catalyze the reverse reaction. The sequence is that of Acetate kinase from Campylobacter concisus (strain 13826).